Here is a 356-residue protein sequence, read N- to C-terminus: Dual-specificity RNA methyltransferase RlmN (356 aa).

The Proton acceptor role is filled by glutamate 92. A Radical SAM core domain is found at 98–334; the sequence is EKDRGTLCIS…MRRTRGEDID (237 aa). A disulfide bond links cysteine 105 and cysteine 337. The [4Fe-4S] cluster site is built by cysteine 112, cysteine 116, and cysteine 119. S-adenosyl-L-methionine is bound by residues 162-163, serine 194, 216-218, and asparagine 294; these read GE and SLH. Catalysis depends on cysteine 337, which acts as the S-methylcysteine intermediate.

The protein belongs to the radical SAM superfamily. RlmN family. The cofactor is [4Fe-4S] cluster.

It is found in the cytoplasm. The enzyme catalyses adenosine(2503) in 23S rRNA + 2 reduced [2Fe-2S]-[ferredoxin] + 2 S-adenosyl-L-methionine = 2-methyladenosine(2503) in 23S rRNA + 5'-deoxyadenosine + L-methionine + 2 oxidized [2Fe-2S]-[ferredoxin] + S-adenosyl-L-homocysteine. The catalysed reaction is adenosine(37) in tRNA + 2 reduced [2Fe-2S]-[ferredoxin] + 2 S-adenosyl-L-methionine = 2-methyladenosine(37) in tRNA + 5'-deoxyadenosine + L-methionine + 2 oxidized [2Fe-2S]-[ferredoxin] + S-adenosyl-L-homocysteine. In terms of biological role, specifically methylates position 2 of adenine 2503 in 23S rRNA and position 2 of adenine 37 in tRNAs. m2A2503 modification seems to play a crucial role in the proofreading step occurring at the peptidyl transferase center and thus would serve to optimize ribosomal fidelity. The sequence is that of Dual-specificity RNA methyltransferase RlmN from Vesicomyosocius okutanii subsp. Calyptogena okutanii (strain HA).